We begin with the raw amino-acid sequence, 157 residues long: Ribosome maturation factor RimP (157 aa).

This sequence belongs to the RimP family.

It localises to the cytoplasm. Functionally, required for maturation of 30S ribosomal subunits. The protein is Ribosome maturation factor RimP of Petrotoga mobilis (strain DSM 10674 / SJ95).